We begin with the raw amino-acid sequence, 321 residues long: 2-oxoglutarate-dependent dioxygenase frbH (321 aa).

Residues 77 to 97 are disordered; it reads SRNSDTHGYEPVATSTGAQDD. The Fe2OG dioxygenase domain occupies 169–273; sequence ESLSTLSMFR…RFSIAYFLRA (105 aa). Residues His194, Asp196, and His251 each contribute to the Fe cation site. Arg264 contacts 2-oxoglutarate.

The protein belongs to the iron/ascorbate-dependent oxidoreductase family.

The protein operates within antifungal biosynthesis. Functionally, 2-oxoglutarate-dependent dioxygenase; part of the gene cluster that mediates the biosynthesis of the antifungal antibiotic FR901469, an inhibitor of beta-1,3-glucansynthase, exerting antifungal activity against the pathogenes Candida albicans and Aspergillus fumigatus. FR901469 is a cyclic depsipeptide containing 12 amino acid residues and a fatty acid chain. The NRPS frbI contains 12 modules responsible for the formation of the depsipeptide backbone which is denoted as Acyl-Thr-Ala-Tyr-Val-4OHPro-Thr-Thr-3OHPro-threo3OHGln-Gly-Thr-Orn-OH (C71H116N14O23). The PKS frbB is probably involved in the production of the hydrocarbon chain, and the acyl-CoA ligase frbC might be involved in the transport of the chain to the peptide ptoduct of frbI. Because FR901469 contains 3 hydroxylated amino acid residues, the 3 oxygenases frbA, frbH, and frbJ might be participating in amino acid hydroxylation. As no thioesterase domains were detected in frbI or frbB, the thioesterases frbD and frbE may instead release and cyclize the products of the NRPS and PKS, respectively. The sequence is that of 2-oxoglutarate-dependent dioxygenase frbH from Dothideomycetidae sp. (strain 11243) (Fungal sp. (strain No.11243)).